A 1183-amino-acid polypeptide reads, in one-letter code: DNA-directed RNA polymerase subunit beta (1183 aa).

It belongs to the RNA polymerase beta chain family. As to quaternary structure, the RNAP catalytic core consists of 2 alpha, 1 beta, 1 beta' and 1 omega subunit. When a sigma factor is associated with the core the holoenzyme is formed, which can initiate transcription.

The enzyme catalyses RNA(n) + a ribonucleoside 5'-triphosphate = RNA(n+1) + diphosphate. In terms of biological role, DNA-dependent RNA polymerase catalyzes the transcription of DNA into RNA using the four ribonucleoside triphosphates as substrates. This chain is DNA-directed RNA polymerase subunit beta, found in Staphylococcus aureus (strain Mu3 / ATCC 700698).